Here is a 318-residue protein sequence, read N- to C-terminus: Olfactory receptor 13C9 (318 aa).

The Extracellular segment spans residues 1 to 25; the sequence is MEWENQTILVEFFLKGHSVHPRLEL. Asn5 carries N-linked (GlcNAc...) asparagine glycosylation. A helical transmembrane segment spans residues 26 to 46; it reads LFFVLIFIMYVVILLGNGTLI. The Cytoplasmic segment spans residues 47-54; that stretch reads LISILDPH. A helical transmembrane segment spans residues 55–75; it reads LHTPMYFFLGNLSFLDICYTT. Topologically, residues 76 to 99 are extracellular; the sequence is TSIPSTLVSFLSERKTISFSGCAV. The cysteines at positions 97 and 189 are disulfide-linked. The helical transmembrane segment at 100–120 threads the bilayer; sequence QMFLGLAMGTTECVLLGMMAF. Residues 121–139 lie on the Cytoplasmic side of the membrane; that stretch reads DRYVAICNPLRYPIIMSKN. Residues 140-160 traverse the membrane as a helical segment; the sequence is AYVPMAVGSWFAGIVNSAVQT. Residues 161 to 197 lie on the Extracellular side of the membrane; that stretch reads TFVVQLPFCRKNVINHFSCEILAVMKLACADISGNEF. The helical transmembrane segment at 198–217 threads the bilayer; sequence LMLVATILFTLMPLLLIVIS. The Cytoplasmic segment spans residues 218-237; the sequence is YSLIISSILKIHSSEGRSKA. A helical membrane pass occupies residues 238-258; sequence FSTCSAHLTVVIIFYGTILFM. Over 259–277 the chain is Extracellular; it reads YMKPKSKETLNSDDLDATD. A helical membrane pass occupies residues 278 to 298; that stretch reads KIISMFYGVMTPMMNPLIYSL. The Cytoplasmic portion of the chain corresponds to 299 to 318; it reads RNKDVKEAVKHLPNRRFFSK.

Belongs to the G-protein coupled receptor 1 family.

It localises to the cell membrane. In terms of biological role, odorant receptor. The polypeptide is Olfactory receptor 13C9 (OR13C9) (Homo sapiens (Human)).